Reading from the N-terminus, the 555-residue chain is Phosphoglucomutase (555 aa).

2 residues coordinate alpha-D-glucose 1,6-bisphosphate: arginine 22 and serine 114. Serine 114 functions as the Phosphoserine intermediate in the catalytic mechanism. Mg(2+) is bound by residues serine 114, aspartate 279, aspartate 281, and aspartate 283. Serine 114 carries the post-translational modification Phosphoserine. Aspartate 283, arginine 284, threonine 347, glutamate 366, serine 368, and lysine 379 together coordinate alpha-D-glucose 1,6-bisphosphate.

Belongs to the phosphohexose mutase family. In terms of assembly, monomer. Mg(2+) is required as a cofactor.

The protein localises to the cytoplasm. The catalysed reaction is alpha-D-glucose 1-phosphate = alpha-D-glucose 6-phosphate. The enzyme catalyses O-phospho-L-seryl-[protein] + alpha-D-glucose 1-phosphate = alpha-D-glucose 1,6-bisphosphate + L-seryl-[protein]. It carries out the reaction alpha-D-glucose 1,6-bisphosphate + L-seryl-[protein] = O-phospho-L-seryl-[protein] + alpha-D-glucose 6-phosphate. Catalyzes the reversible isomerization of alpha-D-glucose 1-phosphate to alpha-D-glucose 6-phosphate. The mechanism proceeds via the intermediate compound alpha-D-glucose 1,6-bisphosphate. Key enzyme in hexose metabolism. The reverse reaction is an essential step for biosynthesis because glucose 1-phosphate is the starting point for the synthesis of UDP-glucose, which acts as a precursor for the synthesis of oligosaccharides and trehalose. The chain is Phosphoglucomutase (pgmA) from Aspergillus fumigatus (strain ATCC MYA-4609 / CBS 101355 / FGSC A1100 / Af293) (Neosartorya fumigata).